A 517-amino-acid polypeptide reads, in one-letter code: Type II methyltransferase M.CeqI (517 aa).

2 disordered regions span residues 1-21 (MVVT…RWPR) and 33-62 (GRPR…HGRS). The span at 51–62 (RPRRGRAPHGRS) shows a compositional bias: basic residues. TPR repeat units lie at residues 283-316 (AEFY…FENN), 361-394 (ALLL…GDHS), and 476-509 (SELA…RTNM).

It catalyses the reaction a 2'-deoxyadenosine in DNA + S-adenosyl-L-methionine = an N(6)-methyl-2'-deoxyadenosine in DNA + S-adenosyl-L-homocysteine + H(+). A methylase, recognizes the double-stranded sequence 5'-GATATC-3', methylates A-? on both strands, and protects the DNA from cleavage by the CeqI endonuclease. This chain is Type II methyltransferase M.CeqI (ceqIM), found in Rhodococcus hoagii (Corynebacterium equii).